The chain runs to 359 residues: Cytosolic sulfotransferase 15 (359 aa).

101–106 lines the 3'-phosphoadenylyl sulfate pocket; the sequence is KSGTTW. Residue His168 is the Proton acceptor of the active site. 3'-phosphoadenylyl sulfate is bound by residues Arg190, Ser198, Tyr256, and 322–324; that span reads RKG.

This sequence belongs to the sulfotransferase 1 family. In terms of tissue distribution, expressed in leaves.

It localises to the cytoplasm. It catalyses the reaction a 12-hydroxyjasmonate + 3'-phosphoadenylyl sulfate = a 12-sulfojasmonate + adenosine 3',5'-bisphosphate + H(+). Its function is as follows. Sulfotransferase that utilizes 3'-phospho-5'-adenylyl sulfate (PAPS) as sulfonate donor to specifically catalyze the sulfate conjugation of hydroxyjasmonates, with a preference for 12-hydroxyjasmonate over 11-hydroxyjasmonate. No activity with 12-hydroxyjasmonic acid methyl ester, cucurbic acid, 7-iso-cucurbic acid, 6-epi-cucurbic acid, 6-epi-7-iso-cucurbic acid and their methyl esters, prostaglandin E2, arachidonyl alcohol and 11-eicosenol. In Arabidopsis thaliana (Mouse-ear cress), this protein is Cytosolic sulfotransferase 15 (SOT15).